Here is a 944-residue protein sequence, read N- to C-terminus: Isoleucine--tRNA ligase (944 aa).

Residues 58 to 68 (PYANGSIHIGH) carry the 'HIGH' region motif. An L-isoleucyl-5'-AMP-binding site is contributed by Glu-563. Positions 604 to 608 (KMSKS) match the 'KMSKS' region motif. Lys-607 provides a ligand contact to ATP. The Zn(2+) site is built by Cys-907, Cys-910, Cys-927, and Cys-930.

Belongs to the class-I aminoacyl-tRNA synthetase family. IleS type 1 subfamily. Monomer. Zn(2+) serves as cofactor.

It localises to the cytoplasm. It carries out the reaction tRNA(Ile) + L-isoleucine + ATP = L-isoleucyl-tRNA(Ile) + AMP + diphosphate. Its function is as follows. Catalyzes the attachment of isoleucine to tRNA(Ile). As IleRS can inadvertently accommodate and process structurally similar amino acids such as valine, to avoid such errors it has two additional distinct tRNA(Ile)-dependent editing activities. One activity is designated as 'pretransfer' editing and involves the hydrolysis of activated Val-AMP. The other activity is designated 'posttransfer' editing and involves deacylation of mischarged Val-tRNA(Ile). This Salmonella choleraesuis (strain SC-B67) protein is Isoleucine--tRNA ligase.